A 213-amino-acid chain; its full sequence is Thiamine import ATP-binding protein ThiQ (213 aa).

The 212-residue stretch at 1–212 (MIELNVTFDY…EQGRIVADQL (212 aa)) folds into the ABC transporter domain. 31–38 (GESGAGKS) is an ATP binding site.

It belongs to the ABC transporter superfamily. Thiamine importer (TC 3.A.1.19.1) family. In terms of assembly, the complex is composed of two ATP-binding proteins (ThiQ), two transmembrane proteins (ThiP) and a solute-binding protein (ThiB).

It is found in the cell inner membrane. It catalyses the reaction thiamine(out) + ATP + H2O = thiamine(in) + ADP + phosphate + H(+). Functionally, part of the ABC transporter complex ThiBPQ involved in thiamine import. Responsible for energy coupling to the transport system. This Haemophilus ducreyi (strain 35000HP / ATCC 700724) protein is Thiamine import ATP-binding protein ThiQ.